A 534-amino-acid chain; its full sequence is Autophagic-related protein 16.2 (534 aa).

WD repeat units lie at residues 243 to 281 (THDG…TDAS), 288 to 329 (GCLG…STFS), 330 to 368 (GHTD…CLKS), 371 to 411 (VGST…ATYS), 413 to 452 (ELGQ…IIHL), 459 to 498 (KTSC…LEKV), and 504 to 534 (SDSA…TLWR).

Belongs to the WD repeat tipD family. In terms of assembly, homodimer (via N-terminus). Most likely a component of a complex at least containing atg-5, lgg-3, atg-16.1 and/or atg-16.2. Interacts (via N-terminus) with atg-16.1 (via N-terminus). Interacts (via N-terminus) with atg-5. Interacts (via WD 5-6 repeats) with lgg-2; the interaction is direct. As to expression, expressed in neurons, pharyngeal muscles, body wall muscle cells and intestinal cells.

It localises to the cytoplasm. The protein localises to the cell membrane. In terms of biological role, most likely a component of the atg-5-atg-12-atg-16.1/atg-16.2 complex, which is recruited to the preautophagosomal membrane and associates with lgg-2 to promote autophagosome formation. Plays a role in the recruitment of lipidated lgg-1 probably to the autophagosome membrane to promote autophagosome formation. Furthermore, association with atg-5 is required for the nucleation of lgg-1 positive autophagosomes. Although its role in autophagosome formation may be distinct to the role of atg-16.2, it functions in a partially redundant manner with atg-16.1 to regulate autophagic processes. In a daf-18/PTEN- and daf-16/FOXO-dependent manner, required for maintaining the numbers of germ stem cell progenitors in the gonad during the late phases of larval development. This is Autophagic-related protein 16.2 from Caenorhabditis elegans.